The primary structure comprises 346 residues: N-acetyl-gamma-glutamyl-phosphate reductase (346 aa).

Cys-150 is a catalytic residue.

The protein belongs to the NAGSA dehydrogenase family. Type 1 subfamily.

The protein resides in the cytoplasm. It catalyses the reaction N-acetyl-L-glutamate 5-semialdehyde + phosphate + NADP(+) = N-acetyl-L-glutamyl 5-phosphate + NADPH + H(+). The protein operates within amino-acid biosynthesis; L-arginine biosynthesis; N(2)-acetyl-L-ornithine from L-glutamate: step 3/4. Its function is as follows. Catalyzes the NADPH-dependent reduction of N-acetyl-5-glutamyl phosphate to yield N-acetyl-L-glutamate 5-semialdehyde. The sequence is that of N-acetyl-gamma-glutamyl-phosphate reductase from Lachnoclostridium phytofermentans (strain ATCC 700394 / DSM 18823 / ISDg) (Clostridium phytofermentans).